The following is a 658-amino-acid chain: Glycogen debranching enzyme (658 aa).

D336 serves as the catalytic Nucleophile. Catalysis depends on E371, which acts as the Proton donor. The interval 459–483 (EANGEENRDGTNSNYSDNHGKEGLG) is disordered.

Belongs to the glycosyl hydrolase 13 family.

It catalyses the reaction Hydrolysis of (1-&gt;6)-alpha-D-glucosidic linkages to branches with degrees of polymerization of three or four glucose residues in limit dextrin.. It participates in glycan degradation; glycogen degradation. Removes maltotriose and maltotetraose chains that are attached by 1,6-alpha-linkage to the limit dextrin main chain, generating a debranched limit dextrin. The polypeptide is Glycogen debranching enzyme (Salmonella agona (strain SL483)).